Consider the following 67-residue polypeptide: ATP synthase F(0) complex subunit 8 (67 aa).

The helical transmembrane segment at T8–F24 threads the bilayer. The residue at position 54 (K54) is an N6-acetyllysine; alternate. N6-succinyllysine; alternate is present on K54. An N6-acetyllysine modification is found at K57.

This sequence belongs to the ATPase protein 8 family. In terms of assembly, component of the ATP synthase complex composed at least of ATP5F1A/subunit alpha, ATP5F1B/subunit beta, ATP5MC1/subunit c (homooctomer), MT-ATP6/subunit a, MT-ATP8/subunit 8, ATP5ME/subunit e, ATP5MF/subunit f, ATP5MG/subunit g, ATP5MK/subunit k, ATP5MJ/subunit j, ATP5F1C/subunit gamma, ATP5F1D/subunit delta, ATP5F1E/subunit epsilon, ATP5PF/subunit F6, ATP5PB/subunit b, ATP5PD/subunit d, ATP5PO/subunit OSCP. ATP synthase complex consists of a soluble F(1) head domain (subunits alpha(3) and beta(3)) - the catalytic core - and a membrane F(0) domain - the membrane proton channel (subunits c, a, 8, e, f, g, k and j). These two domains are linked by a central stalk (subunits gamma, delta, and epsilon) rotating inside the F1 region and a stationary peripheral stalk (subunits F6, b, d, and OSCP). Interacts with PRICKLE3.

Its subcellular location is the mitochondrion membrane. Functionally, subunit 8, of the mitochondrial membrane ATP synthase complex (F(1)F(0) ATP synthase or Complex V) that produces ATP from ADP in the presence of a proton gradient across the membrane which is generated by electron transport complexes of the respiratory chain. ATP synthase complex consist of a soluble F(1) head domain - the catalytic core - and a membrane F(1) domain - the membrane proton channel. These two domains are linked by a central stalk rotating inside the F(1) region and a stationary peripheral stalk. During catalysis, ATP synthesis in the catalytic domain of F(1) is coupled via a rotary mechanism of the central stalk subunits to proton translocation. In vivo, can only synthesize ATP although its ATP hydrolase activity can be activated artificially in vitro. Part of the complex F(0) domain. This is ATP synthase F(0) complex subunit 8 from Canis lupus familiaris (Dog).